The primary structure comprises 121 residues: Small ribosomal subunit protein uS13 (121 aa).

Positions leucine 95–lysine 121 are disordered. Residues alanine 106–lysine 121 show a composition bias toward basic residues.

This sequence belongs to the universal ribosomal protein uS13 family. In terms of assembly, part of the 30S ribosomal subunit. Forms a loose heterodimer with protein S19. Forms two bridges to the 50S subunit in the 70S ribosome.

In terms of biological role, located at the top of the head of the 30S subunit, it contacts several helices of the 16S rRNA. In the 70S ribosome it contacts the 23S rRNA (bridge B1a) and protein L5 of the 50S subunit (bridge B1b), connecting the 2 subunits; these bridges are implicated in subunit movement. Contacts the tRNAs in the A and P-sites. This chain is Small ribosomal subunit protein uS13, found in Streptococcus thermophilus (strain CNRZ 1066).